A 363-amino-acid polypeptide reads, in one-letter code: Peptide chain release factor 1 (363 aa).

At glutamine 237 the chain carries N5-methylglutamine. Positions 284 to 296 are enriched in basic and acidic residues; that stretch reads EDEKRRSAEESTR. Residues 284–305 form a disordered region; the sequence is EDEKRRSAEESTRRSLVASGDR.

The protein belongs to the prokaryotic/mitochondrial release factor family. Post-translationally, methylated by PrmC. Methylation increases the termination efficiency of RF1.

The protein localises to the cytoplasm. Functionally, peptide chain release factor 1 directs the termination of translation in response to the peptide chain termination codons UAG and UAA. In Shewanella baltica (strain OS185), this protein is Peptide chain release factor 1.